Consider the following 337-residue polypeptide: GTPase Obg (337 aa).

In terms of domain architecture, Obg spans 1 to 159 (MQFIDYVKIY…RWVILELKLL (159 aa)). Residues 160–331 (ADVGLIGLPN…LLHYLSEKVG (172 aa)) form the OBG-type G domain. Residues 166 to 173 (GLPNAGKS), 191 to 195 (FTTLI), 213 to 216 (DIPG), 283 to 286 (TKID), and 312 to 314 (SAV) contribute to the GTP site. Residues S173 and T193 each coordinate Mg(2+).

Belongs to the TRAFAC class OBG-HflX-like GTPase superfamily. OBG GTPase family. In terms of assembly, monomer. Mg(2+) is required as a cofactor.

Its subcellular location is the cytoplasm. Its function is as follows. An essential GTPase which binds GTP, GDP and possibly (p)ppGpp with moderate affinity, with high nucleotide exchange rates and a fairly low GTP hydrolysis rate. Plays a role in control of the cell cycle, stress response, ribosome biogenesis and in those bacteria that undergo differentiation, in morphogenesis control. This Thermodesulfovibrio yellowstonii (strain ATCC 51303 / DSM 11347 / YP87) protein is GTPase Obg.